The sequence spans 359 residues: Biotin synthase (359 aa).

The tract at residues Met-1–Ser-23 is disordered. The 227-residue stretch at Tyr-76–Ala-302 folds into the Radical SAM core domain. 3 residues coordinate [4Fe-4S] cluster: Cys-94, Cys-98, and Cys-101. Cys-138, Cys-170, Cys-230, and Arg-300 together coordinate [2Fe-2S] cluster.

Belongs to the radical SAM superfamily. Biotin synthase family. As to quaternary structure, homodimer. [4Fe-4S] cluster serves as cofactor. [2Fe-2S] cluster is required as a cofactor.

The enzyme catalyses (4R,5S)-dethiobiotin + (sulfur carrier)-SH + 2 reduced [2Fe-2S]-[ferredoxin] + 2 S-adenosyl-L-methionine = (sulfur carrier)-H + biotin + 2 5'-deoxyadenosine + 2 L-methionine + 2 oxidized [2Fe-2S]-[ferredoxin]. The protein operates within cofactor biosynthesis; biotin biosynthesis; biotin from 7,8-diaminononanoate: step 2/2. Its function is as follows. Catalyzes the conversion of dethiobiotin (DTB) to biotin by the insertion of a sulfur atom into dethiobiotin via a radical-based mechanism. In Rhodopirellula baltica (strain DSM 10527 / NCIMB 13988 / SH1), this protein is Biotin synthase.